Here is a 950-residue protein sequence, read N- to C-terminus: Coatomer subunit beta-2 (950 aa).

HEAT repeat units follow at residues 92 to 126 (PEMILICQNLRNNLHHPNEYIRGVTLRFLCRLSEP), 127 to 164 (EVLEPLVPSILENLDHRHHFIRRHALSAISSIYRLPHG), 275 to 312 (TAVRAAANTYCELLSSQSDNNVKLIVLDRLNELRTSHR), 313 to 350 (DVMVDVVMDVLRALASPNLDVKRKVLDLVLDLLTARNV), and 392 to 429 (EVAGSVVHLLMDFLGDTNVAAAVDVVLFVREIIETNPK).

As to quaternary structure, oligomeric complex that consists of at least the alpha, beta, beta', gamma, delta, epsilon and zeta subunits.

The protein resides in the cytoplasm. The protein localises to the golgi apparatus membrane. Its subcellular location is the cytoplasmic vesicle. It localises to the COPI-coated vesicle membrane. Its function is as follows. The coatomer is a cytosolic protein complex that binds to dilysine motifs and reversibly associates with Golgi non-clathrin-coated vesicles, which further mediate biosynthetic protein transport from the ER, via the Golgi up to the trans Golgi network. Coatomer complex is required for budding from Golgi membranes, and is essential for the retrograde Golgi-to-ER transport of dilysine-tagged proteins. The polypeptide is Coatomer subunit beta-2 (Oryza sativa subsp. japonica (Rice)).